Reading from the N-terminus, the 249-residue chain is Glucosamine-6-phosphate deaminase (249 aa).

Catalysis depends on aspartate 67, which acts as the Proton acceptor; for enolization step. Catalysis depends on asparagine 136, which acts as the For ring-opening step. Histidine 138 acts as the Proton acceptor; for ring-opening step in catalysis. Glutamate 143 acts as the For ring-opening step in catalysis.

The protein belongs to the glucosamine/galactosamine-6-phosphate isomerase family. NagB subfamily.

The enzyme catalyses alpha-D-glucosamine 6-phosphate + H2O = beta-D-fructose 6-phosphate + NH4(+). It functions in the pathway amino-sugar metabolism; N-acetylneuraminate degradation; D-fructose 6-phosphate from N-acetylneuraminate: step 5/5. Functionally, catalyzes the reversible isomerization-deamination of glucosamine 6-phosphate (GlcN6P) to form fructose 6-phosphate (Fru6P) and ammonium ion. This chain is Glucosamine-6-phosphate deaminase, found in Clostridium botulinum (strain Eklund 17B / Type B).